A 120-amino-acid chain; its full sequence is Protein RALF-like 1 (120 aa).

Residues 1–26 (MDKSFTLFLTLTILVVFIISSPPVQA) form the signal peptide. Residues 27–71 (GFANDLGGVAWATTGDNGSGCHGSIAECIGAEEEEMDSEINRRIL) constitute a propeptide, removed in mature form. An N-linked (GlcNAc...) asparagine glycan is attached at asparagine 43. Intrachain disulfides connect cysteine 89/cysteine 99 and cysteine 112/cysteine 118.

The protein belongs to the plant rapid alkalinization factor (RALF) family. In terms of assembly, interacts with FER and promotes its phosphorylation and subsequent activation. Post-translationally, proteolytically cleaved, probably by S1P, a subtilisin-like serine protease (subtilase). In terms of tissue distribution, expressed in roots and stems.

The protein localises to the secreted. In terms of biological role, cell signaling peptide that may regulate plant stress, growth, and development. Mediates a rapid alkalinization of extracellular space by mediating a transient increase in the cytoplasmic Ca(2+) concentration leading to a calcium-dependent signaling events through a cell surface receptor and a concomitant activation of some intracellular mitogen-activated protein kinases. Mostly active in roots. Prevents plant growth (e.g. root and leaf length). Suppresses cell elongation of the primary root by activating the cell surface receptor FER and triggering phosphorylation of AHA2 and subsequent extracellular alkalinization. The sequence is that of Protein RALF-like 1 (RALF1) from Arabidopsis thaliana (Mouse-ear cress).